The primary structure comprises 705 residues: Phosphoribosylformylglycinamidine synthase subunit PurL (705 aa).

Residue H32 is part of the active site. An ATP-binding site is contributed by Y35. E76 is a Mg(2+) binding site. Residues 77–80 (SHNH) and R99 contribute to the substrate site. The Proton acceptor role is filled by H78. Residue D100 coordinates Mg(2+). Q224 serves as a coordination point for substrate. Position 252 (D252) interacts with Mg(2+). 296–298 (ESQ) is a binding site for substrate. Positions 471 and 508 each coordinate ATP. N509 lines the Mg(2+) pocket. S511 provides a ligand contact to substrate.

The protein belongs to the FGAMS family. In terms of assembly, monomer. Part of the FGAM synthase complex composed of 1 PurL, 1 PurQ and 2 PurS subunits.

The protein resides in the cytoplasm. The enzyme catalyses N(2)-formyl-N(1)-(5-phospho-beta-D-ribosyl)glycinamide + L-glutamine + ATP + H2O = 2-formamido-N(1)-(5-O-phospho-beta-D-ribosyl)acetamidine + L-glutamate + ADP + phosphate + H(+). It functions in the pathway purine metabolism; IMP biosynthesis via de novo pathway; 5-amino-1-(5-phospho-D-ribosyl)imidazole from N(2)-formyl-N(1)-(5-phospho-D-ribosyl)glycinamide: step 1/2. Part of the phosphoribosylformylglycinamidine synthase complex involved in the purines biosynthetic pathway. Catalyzes the ATP-dependent conversion of formylglycinamide ribonucleotide (FGAR) and glutamine to yield formylglycinamidine ribonucleotide (FGAM) and glutamate. The FGAM synthase complex is composed of three subunits. PurQ produces an ammonia molecule by converting glutamine to glutamate. PurL transfers the ammonia molecule to FGAR to form FGAM in an ATP-dependent manner. PurS interacts with PurQ and PurL and is thought to assist in the transfer of the ammonia molecule from PurQ to PurL. The chain is Phosphoribosylformylglycinamidine synthase subunit PurL from Pyrococcus abyssi (strain GE5 / Orsay).